The sequence spans 499 residues: Dipeptide and tripeptide permease A (499 aa).

Topologically, residues 1 to 34 are cytoplasmic; sequence MSTANKKPAESVSMNAFKQPRSFYLIFSIELWER. Residues 35–55 form a helical membrane-spanning segment; the sequence is FGFYGLQGIMAVYLVKQLGMS. Over 56 to 59 the chain is Periplasmic; sequence EADS. The helical transmembrane segment at 60–80 threads the bilayer; sequence ITLFSSFSALVYGLVAIGGWL. Residues 81–89 are Cytoplasmic-facing; sequence GDKVLGTKR. Residues 90-110 form a helical membrane-spanning segment; it reads VIMLGTIVLAIGYALVAWSGH. Residue Asp-111 is a topological domain, periplasmic. Residues 112–132 form a helical membrane-spanning segment; it reads AAIVYFGMATIAVGNGLFKAN. Residues 133–153 lie on the Cytoplasmic side of the membrane; that stretch reads PSALLSTCYEKDDPRLDGAFT. Residues 154 to 174 form a helical membrane-spanning segment; it reads MYYMAINIGSFFSMLATPWLA. The Periplasmic segment spans residues 175–178; the sequence is EKFG. A helical membrane pass occupies residues 179–199; sequence WSVAFSLSFVGMLITLVNFIF. Residues 200–217 are Cytoplasmic-facing; that stretch reads CKKWVKDYGSKPDFAPLH. A helical transmembrane segment spans residues 218–238; sequence VGKLLATIVGIVVLVAIATWL. The Periplasmic segment spans residues 239–246; that stretch reads LHNQGIAR. Residues 247–267 traverse the membrane as a helical segment; sequence LVLGVVALGIVIIFAKEAFAM. Residues 268 to 274 are Cytoplasmic-facing; the sequence is QGAARRK. The chain crosses the membrane as a helical span at residues 275–295; that stretch reads MIVAFILMLEAIVFFVLYQQM. Over 296-320 the chain is Periplasmic; the sequence is PTSLNFFAIRNVEHSILGIAFQPEQ. The chain crosses the membrane as a helical span at residues 321 to 341; sequence FQALNPFWIMIGSPILAAIYN. Over 342–350 the chain is Cytoplasmic; it reads KMGDRLPMP. The helical transmembrane segment at 351-371 threads the bilayer; the sequence is FKFTIGMLLCSGAFLVLPLGA. Topologically, residues 372–383 are periplasmic; the sequence is KFASEAGIVSVN. A helical transmembrane segment spans residues 384–404; the sequence is WLILSYALQSIGELMISGLGL. Over 405-414 the chain is Cytoplasmic; the sequence is AMVAQLVPQR. A helical transmembrane segment spans residues 415–435; sequence LMGFIMGSWFLTTAGAAMIAG. Residues 436–459 are Periplasmic-facing; the sequence is KVANLMAVPENVSDPLQSLEVYGR. A helical transmembrane segment spans residues 460–480; that stretch reads VFMQIGIATGVIAVLMLLTAP. Residues 481–499 lie on the Cytoplasmic side of the membrane; the sequence is LLNRMTQEDKPKETDTAHA.

It belongs to the major facilitator superfamily. Proton-dependent oligopeptide transporter (POT/PTR) (TC 2.A.17) family. DtpA subfamily.

It localises to the cell inner membrane. Functionally, proton-dependent permease that transports di- and tripeptides. The protein is Dipeptide and tripeptide permease A of Cronobacter turicensis (strain DSM 18703 / CCUG 55852 / LMG 23827 / z3032).